Reading from the N-terminus, the 576-residue chain is Arginine--tRNA ligase (576 aa).

The 'HIGH' region signature appears at 122–132; sequence PNVAKEMHVGH.

It belongs to the class-I aminoacyl-tRNA synthetase family. As to quaternary structure, monomer.

It localises to the cytoplasm. It carries out the reaction tRNA(Arg) + L-arginine + ATP = L-arginyl-tRNA(Arg) + AMP + diphosphate. The polypeptide is Arginine--tRNA ligase (Pectobacterium atrosepticum (strain SCRI 1043 / ATCC BAA-672) (Erwinia carotovora subsp. atroseptica)).